We begin with the raw amino-acid sequence, 352 residues long: Chorismate synthase (352 aa).

Residues Arg48 and Arg54 each coordinate NADP(+). Residues 125–127 (RSS), 238–239 (NA), Gly278, 293–297 (KPTSS), and Arg319 contribute to the FMN site.

This sequence belongs to the chorismate synthase family. In terms of assembly, homotetramer. FMNH2 serves as cofactor.

It carries out the reaction 5-O-(1-carboxyvinyl)-3-phosphoshikimate = chorismate + phosphate. It participates in metabolic intermediate biosynthesis; chorismate biosynthesis; chorismate from D-erythrose 4-phosphate and phosphoenolpyruvate: step 7/7. Functionally, catalyzes the anti-1,4-elimination of the C-3 phosphate and the C-6 proR hydrogen from 5-enolpyruvylshikimate-3-phosphate (EPSP) to yield chorismate, which is the branch point compound that serves as the starting substrate for the three terminal pathways of aromatic amino acid biosynthesis. This reaction introduces a second double bond into the aromatic ring system. In Bordetella petrii (strain ATCC BAA-461 / DSM 12804 / CCUG 43448), this protein is Chorismate synthase.